Consider the following 573-residue polypeptide: Solute carrier family 41 member 2 (573 aa).

Topologically, residues 1–162 (MTNCKGRSTI…KESSSIMALQ (162 aa)) are extracellular. The helical transmembrane segment at 163–183 (ILVPFLLAGFGTVTAGMVLDI) threads the bilayer. The Cytoplasmic portion of the chain corresponds to 184–195 (VQHWDVFKNVTE). A helical transmembrane segment spans residues 196–216 (VFILVPALLGLKGNLEMTLAS). Residues 217-245 (RLSTAVNIGKMDSPIEKWNLIIGNLALKQ) lie on the Extracellular side of the membrane. The helical transmembrane segment at 246–266 (VQATVVGFLAAVAAVILGWIP) threads the bilayer. The Cytoplasmic segment spans residues 267–282 (EGKYSFSHSILLCSSS). A helical membrane pass occupies residues 283 to 303 (VATAFIASLLQGIIMVGVIVG). Topologically, residues 304 to 313 (SKKTGINPDN) are extracellular. Residues 314-334 (VATPIAASFGDLITLAILAWI) traverse the membrane as a helical segment. The Cytoplasmic portion of the chain corresponds to 335–347 (SQGLYTCLETYYY). The chain crosses the membrane as a helical span at residues 348 to 368 (VSPLVGAFFLALTPMGIVIAA). Over 369 to 376 (KHPATRTV) the chain is Extracellular. Residues 377–397 (LHSGWEPVITAMIISSIGGLI) traverse the membrane as a helical segment. Residues 398-406 (LDTTVSDPN) are Cytoplasmic-facing. Residues 407-427 (LVGIVVYTPVINGIGGNLVAI) form a helical membrane-spanning segment. The Extracellular segment spans residues 428–469 (QASRISTYLHLHSIPGELPEEAKGCYYPCRTYYGTGVNNKSA). Residues 470 to 490 (QVLLLLVIPGHLIFLYTIHLM) traverse the membrane as a helical segment. Residues 491-499 (KSGHTSLTP) are Cytoplasmic-facing. The helical transmembrane segment at 500 to 520 (IFIAVYLFAALLQVFTLLWIA) threads the bilayer. Topologically, residues 521-543 (DWMVHHFWKKGKDPDSFSIPYLT) are extracellular. The chain crosses the membrane as a helical span at residues 544-564 (ALGDLLGTALLAVGFHFLWLI). At 565-573 (GDRDGDVGD) the chain is on the cytoplasmic side.

It belongs to the SLC41A transporter family.

Its subcellular location is the cell membrane. The enzyme catalyses Mg(2+)(in) = Mg(2+)(out). It catalyses the reaction Mn(2+)(in) = Mn(2+)(out). The catalysed reaction is Co(2+)(in) = Co(2+)(out). It carries out the reaction Ni(2+)(in) = Ni(2+)(out). The enzyme catalyses Fe(2+)(in) = Fe(2+)(out). In terms of biological role, acts as a plasma-membrane magnesium transporter. Can also mediate the transport of other divalent metal cations in an order of Ba(2+) &gt; Ni(2+) &gt; Co(2+) &gt; Fe(2+) &gt; Mn(2+). The sequence is that of Solute carrier family 41 member 2 (SLC41A2) from Gallus gallus (Chicken).